A 476-amino-acid chain; its full sequence is Membrane-bound lytic murein transglycosylase F (476 aa).

A signal peptide spans 1–16 (MIKTLFIILLCGILSA). Positions 17–259 (CQPVDIQDVD…HLNEKYFGHV (243 aa)) are non-LT domain. The LT domain stretch occupies residues 260-476 (KRFDYVDTRA…VPAKSHVSAQ (217 aa)). The active site involves E304.

It in the N-terminal section; belongs to the bacterial solute-binding protein 3 family. This sequence in the C-terminal section; belongs to the transglycosylase Slt family.

It localises to the cell outer membrane. It catalyses the reaction Exolytic cleavage of the (1-&gt;4)-beta-glycosidic linkage between N-acetylmuramic acid (MurNAc) and N-acetylglucosamine (GlcNAc) residues in peptidoglycan, from either the reducing or the non-reducing ends of the peptidoglycan chains, with concomitant formation of a 1,6-anhydrobond in the MurNAc residue.. Functionally, murein-degrading enzyme that degrades murein glycan strands and insoluble, high-molecular weight murein sacculi, with the concomitant formation of a 1,6-anhydromuramoyl product. Lytic transglycosylases (LTs) play an integral role in the metabolism of the peptidoglycan (PG) sacculus. Their lytic action creates space within the PG sacculus to allow for its expansion as well as for the insertion of various structures such as secretion systems and flagella. The protein is Membrane-bound lytic murein transglycosylase F of Shewanella frigidimarina (strain NCIMB 400).